Here is a 320-residue protein sequence, read N- to C-terminus: Cytochrome f (320 aa).

Positions 1–35 (MQTRNAFSYIKEEITRSISVLLVIYIIIRAPISNA) are cleaved as a signal peptide. 4 residues coordinate heme: Tyr-36, Cys-56, Cys-59, and His-60. The helical transmembrane segment at 286–305 (VQGLLFFLASIIFAQIFLVL) threads the bilayer.

Belongs to the cytochrome f family. The 4 large subunits of the cytochrome b6-f complex are cytochrome b6, subunit IV (17 kDa polypeptide, petD), cytochrome f and the Rieske protein, while the 4 small subunits are PetG, PetL, PetM and PetN. The complex functions as a dimer. Heme serves as cofactor.

Its subcellular location is the plastid. The protein localises to the chloroplast thylakoid membrane. In terms of biological role, component of the cytochrome b6-f complex, which mediates electron transfer between photosystem II (PSII) and photosystem I (PSI), cyclic electron flow around PSI, and state transitions. The chain is Cytochrome f from Lotus japonicus (Lotus corniculatus var. japonicus).